The sequence spans 107 residues: SOSS complex subunit C (107 aa).

Belongs to the SOSS-C family. As to quaternary structure, belongs to the multiprotein complex Integrator. Component of the SOSS complex, composed of soss-b (soss-b1/nabp2 or soss-b2/nabp1), soss-a/ints3 and soss-c/inip.

The protein localises to the nucleus. Component of the SOSS complex, a multiprotein complex that functions downstream of the MRN complex to promote DNA repair and G2/M checkpoint. The SOSS complex associates with single-stranded DNA at DNA lesions and influences diverse endpoints in the cellular DNA damage response including cell-cycle checkpoint activation, recombinational repair and maintenance of genomic stability. Required for efficient homologous recombination-dependent repair of double-strand breaks (DSBs). In Salmo salar (Atlantic salmon), this protein is SOSS complex subunit C (inip).